The sequence spans 595 residues: DNA polymerase (595 aa).

The 212-residue stretch at 1–212 folds into the 3'-5' exonuclease domain; it reads MIELRHEVQG…CKSLTPLVPD (212 aa). A polymerase region spans residues 213 to 595; that stretch reads VSRSLVPYEH…SWGSLYGADY (383 aa).

This sequence belongs to the DNA polymerase type-A family.

It catalyses the reaction DNA(n) + a 2'-deoxyribonucleoside 5'-triphosphate = DNA(n+1) + diphosphate. Its function is as follows. Replicates viral genomic DNA. This polymerase possesses two enzymatic activities: DNA synthesis (polymerase) and an exonucleolytic activity that degrades single-stranded DNA in the 3'-5' direction. In Mycobacterium phage L5 (Mycobacteriophage L5), this protein is DNA polymerase (44).